The following is a 122-amino-acid chain: UPF0102 protein Dred_2035 (122 aa).

It belongs to the UPF0102 family.

The sequence is that of UPF0102 protein Dred_2035 from Desulforamulus reducens (strain ATCC BAA-1160 / DSM 100696 / MI-1) (Desulfotomaculum reducens).